The sequence spans 254 residues: Imidazole glycerol phosphate synthase subunit HisF (254 aa).

Catalysis depends on residues aspartate 13 and aspartate 132.

The protein belongs to the HisA/HisF family. Heterodimer of HisH and HisF.

It localises to the cytoplasm. The catalysed reaction is 5-[(5-phospho-1-deoxy-D-ribulos-1-ylimino)methylamino]-1-(5-phospho-beta-D-ribosyl)imidazole-4-carboxamide + L-glutamine = D-erythro-1-(imidazol-4-yl)glycerol 3-phosphate + 5-amino-1-(5-phospho-beta-D-ribosyl)imidazole-4-carboxamide + L-glutamate + H(+). Its pathway is amino-acid biosynthesis; L-histidine biosynthesis; L-histidine from 5-phospho-alpha-D-ribose 1-diphosphate: step 5/9. IGPS catalyzes the conversion of PRFAR and glutamine to IGP, AICAR and glutamate. The HisF subunit catalyzes the cyclization activity that produces IGP and AICAR from PRFAR using the ammonia provided by the HisH subunit. The sequence is that of Imidazole glycerol phosphate synthase subunit HisF from Sulfurovum sp. (strain NBC37-1).